The following is a 232-amino-acid chain: Orotidine 5'-phosphate decarboxylase (232 aa).

Residues aspartate 13, lysine 35, 62–71 (DLKFHDIPNT), threonine 122, arginine 182, glutamine 191, glycine 211, and arginine 212 each bind substrate. The active-site Proton donor is the lysine 64.

Belongs to the OMP decarboxylase family. Type 1 subfamily. As to quaternary structure, homodimer.

It carries out the reaction orotidine 5'-phosphate + H(+) = UMP + CO2. The protein operates within pyrimidine metabolism; UMP biosynthesis via de novo pathway; UMP from orotate: step 2/2. In terms of biological role, catalyzes the decarboxylation of orotidine 5'-monophosphate (OMP) to uridine 5'-monophosphate (UMP). The sequence is that of Orotidine 5'-phosphate decarboxylase from Pseudomonas fluorescens (strain Pf0-1).